The sequence spans 359 residues: Uroporphyrinogen decarboxylase (359 aa).

Substrate-binding positions include 36 to 40, Asp85, Tyr160, Ser215, and His338; that span reads RQAGR.

Belongs to the uroporphyrinogen decarboxylase family. In terms of assembly, homodimer.

Its subcellular location is the cytoplasm. The catalysed reaction is uroporphyrinogen III + 4 H(+) = coproporphyrinogen III + 4 CO2. It participates in porphyrin-containing compound metabolism; protoporphyrin-IX biosynthesis; coproporphyrinogen-III from 5-aminolevulinate: step 4/4. Functionally, catalyzes the decarboxylation of four acetate groups of uroporphyrinogen-III to yield coproporphyrinogen-III. In Corynebacterium efficiens (strain DSM 44549 / YS-314 / AJ 12310 / JCM 11189 / NBRC 100395), this protein is Uroporphyrinogen decarboxylase.